The chain runs to 125 residues: Conopressin-conophysin, isoform 1 (125 aa).

The signal sequence occupies residues 1 to 22; that stretch reads MQMGRPTLLPCLLLLLVLSTQA. The cysteines at positions 23 and 28 are disulfide-linked. At glycine 31 the chain carries Glycine amide. Residues 32–39 constitute a propeptide that is removed on maturation; sequence GKRDVHMI. 7 disulfides stabilise this stretch: cysteine 45–cysteine 85, cysteine 48–cysteine 59, cysteine 53–cysteine 75, cysteine 60–cysteine 65, cysteine 92–cysteine 112, cysteine 104–cysteine 124, and cysteine 113–cysteine 118.

It belongs to the vasopressin/oxytocin family. In terms of tissue distribution, expressed by the venom gland.

The protein localises to the secreted. Targets vasopressin-oxytocin related receptors. The protein is Conopressin-conophysin, isoform 1 of Conus monile (Necklace cone).